The chain runs to 247 residues: Cell division protein ZapD (247 aa).

Belongs to the ZapD family. As to quaternary structure, interacts with FtsZ.

The protein localises to the cytoplasm. Functionally, cell division factor that enhances FtsZ-ring assembly. Directly interacts with FtsZ and promotes bundling of FtsZ protofilaments, with a reduction in FtsZ GTPase activity. The sequence is that of Cell division protein ZapD from Escherichia coli O157:H7.